The sequence spans 154 residues: 6,7-dimethyl-8-ribityllumazine synthase (154 aa).

5-amino-6-(D-ribitylamino)uracil-binding positions include Phe-22, 56–58 (AFE), and 80–82 (AVI). 85 to 86 (AT) is a binding site for (2S)-2-hydroxy-3-oxobutyl phosphate. The Proton donor role is filled by His-88. Phe-113 serves as a coordination point for 5-amino-6-(D-ribitylamino)uracil. Arg-127 contacts (2S)-2-hydroxy-3-oxobutyl phosphate.

The protein belongs to the DMRL synthase family. In terms of assembly, forms an icosahedral capsid composed of 60 subunits, arranged as a dodecamer of pentamers.

It carries out the reaction (2S)-2-hydroxy-3-oxobutyl phosphate + 5-amino-6-(D-ribitylamino)uracil = 6,7-dimethyl-8-(1-D-ribityl)lumazine + phosphate + 2 H2O + H(+). It participates in cofactor biosynthesis; riboflavin biosynthesis; riboflavin from 2-hydroxy-3-oxobutyl phosphate and 5-amino-6-(D-ribitylamino)uracil: step 1/2. Functionally, catalyzes the formation of 6,7-dimethyl-8-ribityllumazine by condensation of 5-amino-6-(D-ribitylamino)uracil with 3,4-dihydroxy-2-butanone 4-phosphate. This is the penultimate step in the biosynthesis of riboflavin. This is 6,7-dimethyl-8-ribityllumazine synthase from Anoxybacillus flavithermus (strain DSM 21510 / WK1).